Reading from the N-terminus, the 191-residue chain is Protein HP-20 homolog (191 aa).

The first 16 residues, 1-16 (MADLRILVSIILMTNA), serve as a signal peptide directing secretion. Residues 22–58 (GCTGPPGPPGHPGPPGIRGPPGIRGIPGLPGPPGTPG) form the Collagen-like domain. The segment at 22 to 61 (GCTGPPGPPGHPGPPGIRGPPGIRGIPGLPGPPGTPGPSV) is disordered. Over residues 26–39 (PPGPPGHPGPPGIR) the composition is skewed to pro residues. The C1q domain maps to 64 to 191 (PCHRQSAFTV…VTIYFSGFLT (128 aa)).

It is found in the secreted. This chain is Protein HP-20 homolog, found in Bos taurus (Bovine).